A 497-amino-acid chain; its full sequence is RNA-splicing ligase RtcB homolog (497 aa).

Asp111, Cys114, His219, His251, and His345 together coordinate Mn(2+). 218 to 222 (NHYAE) lines the GMP pocket. GMP-binding positions include 345–346 (HN), 394–397 (GGTM), Ser401, 420–423 (HGAG), and Lys496. His420 (GMP-histidine intermediate) is an active-site residue.

This sequence belongs to the RtcB family. In terms of assembly, catalytic component of the tRNA-splicing ligase complex. Requires Mn(2+) as cofactor.

The catalysed reaction is a 3'-end 3'-phospho-ribonucleotide-RNA + a 5'-end dephospho-ribonucleoside-RNA + GTP = a ribonucleotidyl-ribonucleotide-RNA + GMP + diphosphate. The enzyme catalyses a 3'-end 2',3'-cyclophospho-ribonucleotide-RNA + a 5'-end dephospho-ribonucleoside-RNA + GTP + H2O = a ribonucleotidyl-ribonucleotide-RNA + GMP + diphosphate + H(+). In terms of biological role, catalytic subunit of the tRNA-splicing ligase complex that acts by directly joining spliced tRNA halves to mature-sized tRNAs by incorporating the precursor-derived splice junction phosphate into the mature tRNA as a canonical 3',5'-phosphodiester. May act as an RNA ligase with broad substrate specificity, and may function toward other RNAs. The sequence is that of RNA-splicing ligase RtcB homolog from Monosiga brevicollis (Choanoflagellate).